The sequence spans 354 residues: Protein RecA (354 aa).

Position 78–85 (78–85) interacts with ATP; that stretch reads GPESSGKT.

The protein belongs to the RecA family.

It localises to the cytoplasm. Functionally, can catalyze the hydrolysis of ATP in the presence of single-stranded DNA, the ATP-dependent uptake of single-stranded DNA by duplex DNA, and the ATP-dependent hybridization of homologous single-stranded DNAs. It interacts with LexA causing its activation and leading to its autocatalytic cleavage. The sequence is that of Protein RecA from Zymomonas mobilis subsp. mobilis (strain ATCC 31821 / ZM4 / CP4).